The primary structure comprises 552 residues: ATP synthase subunit alpha (552 aa).

ATP is bound at residue 173–180 (GDRQTGKS). A disordered region spans residues 509–552 (KPQFSGGSKGSNVPKDVDAGATDADDISQEKITTRKGGATAARG).

The protein belongs to the ATPase alpha/beta chains family. In terms of assembly, F-type ATPases have 2 components, CF(1) - the catalytic core - and CF(0) - the membrane proton channel. CF(1) has five subunits: alpha(3), beta(3), gamma(1), delta(1), epsilon(1). CF(0) has three main subunits: a(1), b(2) and c(9-12). The alpha and beta chains form an alternating ring which encloses part of the gamma chain. CF(1) is attached to CF(0) by a central stalk formed by the gamma and epsilon chains, while a peripheral stalk is formed by the delta and b chains.

The protein resides in the cell membrane. The enzyme catalyses ATP + H2O + 4 H(+)(in) = ADP + phosphate + 5 H(+)(out). Produces ATP from ADP in the presence of a proton gradient across the membrane. The alpha chain is a regulatory subunit. The protein is ATP synthase subunit alpha of Kineococcus radiotolerans (strain ATCC BAA-149 / DSM 14245 / SRS30216).